A 270-amino-acid chain; its full sequence is uncharacterized protein (270 aa).

Basic and acidic residues predominate over residues 1–10 (MFGLKVKDAT). Disordered regions lie at residues 1–115 (MFGL…PTPW) and 215–236 (QTGFDTDDTDNKKQGFRKQGEQ). Low complexity-rich tracts occupy residues 26–41 (SSSSSTTSSTSTTQRG) and 98–113 (GTSPSSSESGQSGTPT).

This sequence belongs to the adhesin P1 family.

This is an uncharacterized protein from Mycoplasma pneumoniae (strain ATCC 29342 / M129 / Subtype 1) (Mycoplasmoides pneumoniae).